The chain runs to 686 residues: Pollen receptor-like kinase 5 (686 aa).

The signal sequence occupies residues 1-39 (MRNWEDPFTLACNTALKKNLPSCIFIIIFISVLCPVAMS). Residues 40–283 (QVVVPDSDAD…GKKAGSFYTL (244 aa)) are Extracellular-facing. N-linked (GlcNAc...) asparagine glycosylation is present at N60. LRR repeat units follow at residues 112–135 (MKNL…VKRF), 136–159 (TSLK…AFLG), 161–184 (PLLK…LASL), 185–208 (PMLL…QQKD), and 210–230 (KLAS…LRNM). A helical transmembrane segment spans residues 284 to 304 (AIILIVIGIILVIIALVFCFV). The Cytoplasmic portion of the chain corresponds to 305-686 (QSRRRNFLSA…DDDFGFSMNR (382 aa)). Polar residues predominate over residues 328-339 (NYHQSTNKNNKP). Residues 328 to 355 (NYHQSTNKNNKPAESVNHTRRGSMPDPG) form a disordered region. The Protein kinase domain occupies 375–648 (RASAEVLGSG…REVVEMVEML (274 aa)). S377 bears the Phosphoserine mark. Residues 381-389 (LGSGTFGAS) and K403 each bind ATP. A phosphoserine mark is found at S455 and S458. T472 is subject to Phosphothreonine. Position 542 is a phosphotyrosine (Y542). S545 is modified (phosphoserine).

This sequence belongs to the protein kinase superfamily. Ser/Thr protein kinase family. In terms of assembly, interacts with the GRI peptide. Expressed in pollen and/or in flowers. Detected at low levels in leaves.

It is found in the cell membrane. The catalysed reaction is L-seryl-[protein] + ATP = O-phospho-L-seryl-[protein] + ADP + H(+). The enzyme catalyses L-threonyl-[protein] + ATP = O-phospho-L-threonyl-[protein] + ADP + H(+). Its function is as follows. Receptor-like kinase involved in the control of pollen germination and pollen tube polar growth. The extracellular domain serves as a sensor for peptides derived from GRI. May act as a downstream element for ROS-dependent cell death induced by GRI. The protein is Pollen receptor-like kinase 5 of Arabidopsis thaliana (Mouse-ear cress).